The sequence spans 444 residues: Crh-like protein 3 (444 aa).

The signal sequence occupies residues 1 to 19; the sequence is MVGKSTLLSVLASASVAFA. Cysteine 27 and cysteine 34 are joined by a disulfide. Positions 57–271 constitute a GH16 domain; that stretch reads SLESCVPEPV…WAGGEIDWNS (215 aa). Glutamate 157 acts as the Nucleophile in catalysis. Glutamate 161 functions as the Proton donor in the catalytic mechanism. Glutamate 161 contacts chitin. Residues asparagine 187 and asparagine 228 are each glycosylated (N-linked (GlcNAc...) asparagine). The chitin site is built by tryptophan 248 and threonine 259. N-linked (GlcNAc...) asparagine glycosylation is found at asparagine 315, asparagine 323, asparagine 336, and asparagine 371. A lipid anchor (GPI-anchor amidated serine) is attached at serine 415. The propeptide at 416-444 is removed in mature form; sequence ADSLVANQERVLKGSLFAGIVAVVAMMAL.

Belongs to the glycosyl hydrolase 16 family. CRH1 subfamily. Forms homodimers as well as heterodimers with other crh protein members crh1 and crh2. Dimerization may be necessary for the transglycosylation activity.

The protein localises to the cell membrane. It catalyses the reaction Random endo-hydrolysis of N-acetyl-beta-D-glucosaminide (1-&gt;4)-beta-linkages in chitin and chitodextrins.. Functionally, dual chitinase/transglycosylase that plays a role in cell wall architecture. Chitinase and transglycosylase activities are coupled. Required for the polysaccharide cross-linking at the septa and the cell wall. More specifically, transfers chitin to 1,6-beta-glucan in the cell wall. This Botryotinia fuckeliana (strain B05.10) (Noble rot fungus) protein is Crh-like protein 3.